The chain runs to 302 residues: 33 kDa chaperonin (302 aa).

Disulfide bonds link cysteine 247-cysteine 249 and cysteine 280-cysteine 283.

It belongs to the HSP33 family. In terms of processing, under oxidizing conditions two disulfide bonds are formed involving the reactive cysteines. Under reducing conditions zinc is bound to the reactive cysteines and the protein is inactive.

The protein localises to the cytoplasm. In terms of biological role, redox regulated molecular chaperone. Protects both thermally unfolding and oxidatively damaged proteins from irreversible aggregation. Plays an important role in the bacterial defense system toward oxidative stress. In Prochlorococcus marinus (strain MIT 9301), this protein is 33 kDa chaperonin.